Consider the following 208-residue polypeptide: Ribosomal RNA small subunit methyltransferase G (208 aa).

S-adenosyl-L-methionine-binding positions include Gly-73, Leu-78, 124-125, and Arg-139; that span reads VE.

It belongs to the methyltransferase superfamily. RNA methyltransferase RsmG family.

It is found in the cytoplasm. The catalysed reaction is guanosine(527) in 16S rRNA + S-adenosyl-L-methionine = N(7)-methylguanosine(527) in 16S rRNA + S-adenosyl-L-homocysteine. In terms of biological role, specifically methylates the N7 position of guanine in position 527 of 16S rRNA. In Aeromonas salmonicida (strain A449), this protein is Ribosomal RNA small subunit methyltransferase G.